The chain runs to 463 residues: MLPSQSPAIFTVSRLNQTVRLLLEREMGQVWISGEISNFSQPSSGHWYFTLKDDNAQVRCAMFRNSNRRVTFRPQHGQQVLVRANITLYEPRGDYQIIVESMQPAGEGLLQQKYEQLKAQLTAEGLFEQKHKQALPSPAHCVGVITSKTGAALHDILHVLRRRDPGLPVIIYPTSVQGDDAPGQIVRAIALANARQECDVLIVGRGGGSLEDLWSFNDERVARAIFASQIPIVSAVGHETDVTIADFVADLRAPTPSAAAEIVSRNQQELLRQLQSGQQRLEMAMDYFLASRQRRFTQLFHRLQQQHPQLRLARQQTALERLRQRMRIAVESQLKRAEQRQKRTVQRLNHYNPQPRIHRAQSRIQQLEYRLAEIMRGRLSERRERFGNAVTHLEAVSPLATLARGYSVTSVSDGTVLKQTKQVKTGDLLTTRLKDGWVESEVKQIAPVKKTRARKPSPTKPAE.

It belongs to the XseA family. Heterooligomer composed of large and small subunits.

It is found in the cytoplasm. It catalyses the reaction Exonucleolytic cleavage in either 5'- to 3'- or 3'- to 5'-direction to yield nucleoside 5'-phosphates.. In terms of biological role, bidirectionally degrades single-stranded DNA into large acid-insoluble oligonucleotides, which are then degraded further into small acid-soluble oligonucleotides. This chain is Exodeoxyribonuclease 7 large subunit, found in Klebsiella pneumoniae subsp. pneumoniae (strain ATCC 700721 / MGH 78578).